A 273-amino-acid chain; its full sequence is Urease accessory protein UreD (273 aa).

It belongs to the UreD family. As to quaternary structure, ureD, UreF and UreG form a complex that acts as a GTP-hydrolysis-dependent molecular chaperone, activating the urease apoprotein by helping to assemble the nickel containing metallocenter of UreC. The UreE protein probably delivers the nickel.

The protein resides in the cytoplasm. Required for maturation of urease via the functional incorporation of the urease nickel metallocenter. In Rhizobium johnstonii (strain DSM 114642 / LMG 32736 / 3841) (Rhizobium leguminosarum bv. viciae), this protein is Urease accessory protein UreD.